Here is a 208-residue protein sequence, read N- to C-terminus: Ubiquitin-conjugating enzyme E2 S (208 aa).

The region spanning 14 to 160 is the UBC core domain; that stretch reads QTIRQVMREL…ARMMTEIHAQ (147 aa). Catalysis depends on cysteine 98, which acts as the Glycyl thioester intermediate. The tract at residues 159 to 208 is disordered; sequence AQPAKCASTTSDAKDDDGPSTKKHAGLDKKLQDKKKEKLLKEKKRMLKRL. Residues 170-198 are compositionally biased toward basic and acidic residues; that stretch reads DAKDDDGPSTKKHAGLDKKLQDKKKEKLL. Over residues 199-208 the composition is skewed to basic residues; it reads KEKKRMLKRL.

This sequence belongs to the ubiquitin-conjugating enzyme family.

The catalysed reaction is S-ubiquitinyl-[E1 ubiquitin-activating enzyme]-L-cysteine + [E2 ubiquitin-conjugating enzyme]-L-cysteine = [E1 ubiquitin-activating enzyme]-L-cysteine + S-ubiquitinyl-[E2 ubiquitin-conjugating enzyme]-L-cysteine.. It participates in protein modification; protein ubiquitination. Its function is as follows. Catalyzes the covalent attachment of ubiquitin to other proteins. Acts as an essential factor of the anaphase promoting complex/cyclosome (APC/C), a cell cycle-regulated ubiquitin ligase that controls progression through mitosis. Acts by specifically elongating polyubiquitin chains initiated by the E2 enzyme vih/UbcH10 on APC/C substrates, enhancing the degradation of APC/C substrates by the proteasome and promoting mitotic exit. The sequence is that of Ubiquitin-conjugating enzyme E2 S from Drosophila willistoni (Fruit fly).